We begin with the raw amino-acid sequence, 1168 residues long: Transcription-repair-coupling factor (1168 aa).

In terms of domain architecture, Helicase ATP-binding spans 633–794; it reads DMQKSRPMDR…MLGVRDLSVI (162 aa). An ATP-binding site is contributed by 646-653; the sequence is GDVGYGKT. A DEEQ box motif is present at residues 747–750; that stretch reads DEEQ. Positions 808–969 constitute a Helicase C-terminal domain; that stretch reads VLEQNMSFIK…GFKIAMRDLN (162 aa).

In the N-terminal section; belongs to the UvrB family. This sequence in the C-terminal section; belongs to the helicase family. RecG subfamily.

It localises to the cytoplasm. In terms of biological role, couples transcription and DNA repair by recognizing RNA polymerase (RNAP) stalled at DNA lesions. Mediates ATP-dependent release of RNAP and its truncated transcript from the DNA, and recruitment of nucleotide excision repair machinery to the damaged site. The polypeptide is Transcription-repair-coupling factor (Staphylococcus aureus (strain USA300)).